A 466-amino-acid polypeptide reads, in one-letter code: Dihydrolipoyl dehydrogenase (466 aa).

FAD-binding positions include 34–42 (ERVHLGGIC), lysine 51, and glycine 114. The cysteines at positions 42 and 47 are disulfide-linked. Residues 180–184 (GSGAI), glutamate 203, and 269–272 (AIGV) contribute to the NAD(+) site. Residues aspartate 311 and alanine 319 each coordinate FAD. Catalysis depends on histidine 445, which acts as the Proton acceptor.

This sequence belongs to the class-I pyridine nucleotide-disulfide oxidoreductase family. In terms of assembly, homodimer. FAD serves as cofactor.

The protein localises to the cytoplasm. It carries out the reaction N(6)-[(R)-dihydrolipoyl]-L-lysyl-[protein] + NAD(+) = N(6)-[(R)-lipoyl]-L-lysyl-[protein] + NADH + H(+). Its function is as follows. Lipoamide dehydrogenase is a component of the alpha-ketoacid dehydrogenase complexes. The chain is Dihydrolipoyl dehydrogenase (lpd) from Zymomonas mobilis subsp. mobilis (strain ATCC 31821 / ZM4 / CP4).